An 89-amino-acid chain; its full sequence is Small ribosomal subunit protein uS15 (89 aa).

Belongs to the universal ribosomal protein uS15 family. Part of the 30S ribosomal subunit. Forms a bridge to the 50S subunit in the 70S ribosome, contacting the 23S rRNA.

Its function is as follows. One of the primary rRNA binding proteins, it binds directly to 16S rRNA where it helps nucleate assembly of the platform of the 30S subunit by binding and bridging several RNA helices of the 16S rRNA. Functionally, forms an intersubunit bridge (bridge B4) with the 23S rRNA of the 50S subunit in the ribosome. In Cereibacter sphaeroides (strain ATCC 17025 / ATH 2.4.3) (Rhodobacter sphaeroides), this protein is Small ribosomal subunit protein uS15.